Consider the following 835-residue polypeptide: Protein VP3 (835 aa).

Residues 171–245 (RKIKERMTTS…KHTIKLKQEK (75 aa)) form an N7-methyltransferase activity region. The interval 246-428 (WLGKRVSQFD…INIKRFIPKG (183 aa)) is 2'-O-methyltransferase activity. The N7-methyltransferase activity stretch occupies residues 429–555 (VFYAFINNIT…NHLFIINGTD (127 aa)). The GTase/RTPase activity stretch occupies residues 556–692 (KYYKLDQYAN…EYINKVYSIT (137 aa)). The segment at 693 to 835 (YADDPNYFIG…KGETVFDMSE (143 aa)) is 2'-5'-phosphodiesterase activity. Active-site for 2'-5'-phosphodiesterase activity residues include His718, Thr720, His797, and Thr799.

This sequence belongs to the rotavirus VP3 family. In terms of assembly, interacts with VP1. Interacts with VP2.

It is found in the virion. The catalysed reaction is a 5'-end diphospho-ribonucleoside in mRNA + GTP + H(+) = a 5'-end (5'-triphosphoguanosine)-ribonucleoside in mRNA + diphosphate. It catalyses the reaction a 5'-end (5'-triphosphoguanosine)-ribonucleoside in mRNA + S-adenosyl-L-methionine = a 5'-end (N(7)-methyl 5'-triphosphoguanosine)-ribonucleoside in mRNA + S-adenosyl-L-homocysteine. It carries out the reaction 5'-triphosphoadenylyl-(2'-&gt;5')-adenylyl-(2'-&gt;5')-adenosine + 2 H2O = 2 AMP + ATP + 2 H(+). Functionally, multifunctional enzyme involved in mRNA capping. Catalyzes the formation of the 5' cap structure on the viral plus-strand transcripts. Specifically binds to GTP and displays guanylyltransferase and methyltransferase activities. Has affinity for ssRNA but not for dsRNA. Capping activity is non-specific and caps RNAs that initiate with either a G or an A residue. Together with VP1 polymerase, forms a VP1-VP3 complex positioned near the channels situated at each of the five-fold vertices of the core. Following infection, the outermost layer of the virus is lost, leaving a double-layered particle (DLP) made up of the core and VP6 shell. VP1 then catalyzes the transcription of fully conservative plus-strand genomic RNAs that are capped by VP3 and extruded through the DLP's channels into the cytoplasm where they function as mRNAs for translation of viral proteins. DLPs probably have an RNA triphosphatase activity as well, whereas open cores do not. In terms of biological role, counteracts the host innate immune response thanks to its phosphodiesterase that degrades the 5'-triphosphorylated, 2'-5' linked adenylate oligomers produced by the host cell IFN-inducible 2',5'-oligoadenylate synthetase (OAS). The host RNaseL is therefore not activated. This Homo sapiens (Human) protein is Protein VP3.